A 165-amino-acid chain; its full sequence is Thiol peroxidase (165 aa).

In terms of domain architecture, Thioredoxin spans 18–164 (RKVGDKAPNF…YEAAIEAAKK (147 aa)). Cys-60 acts as the Cysteine sulfenic acid (-SOH) intermediate in catalysis. A disulfide bridge links Cys-60 with Cys-94.

The protein belongs to the peroxiredoxin family. Tpx subfamily. Homodimer.

It carries out the reaction a hydroperoxide + [thioredoxin]-dithiol = an alcohol + [thioredoxin]-disulfide + H2O. Functionally, thiol-specific peroxidase that catalyzes the reduction of hydrogen peroxide and organic hydroperoxides to water and alcohols, respectively. Plays a role in cell protection against oxidative stress by detoxifying peroxides. The sequence is that of Thiol peroxidase from Listeria innocua serovar 6a (strain ATCC BAA-680 / CLIP 11262).